Consider the following 415-residue polypeptide: Multidrug resistance protein MdtA (415 aa).

The signal sequence occupies residues 1–21 (MKGSYKSRWVIVIVVVIAAIA). Disordered regions lie at residues 32 to 59 (SRSAAPGATKQAQQSPAGGRRGMRSGPL) and 392 to 415 (EAQSATTSEEKATSREYAKKGARS). The span at 399–415 (SEEKATSREYAKKGARS) shows a compositional bias: basic and acidic residues.

It belongs to the membrane fusion protein (MFP) (TC 8.A.1) family. In terms of assembly, part of a tripartite efflux system composed of MdtA, MdtB and MdtC.

Its subcellular location is the cell inner membrane. In terms of biological role, the MdtABC tripartite complex confers resistance against novobiocin and deoxycholate. This Escherichia coli (strain SMS-3-5 / SECEC) protein is Multidrug resistance protein MdtA.